Reading from the N-terminus, the 662-residue chain is DNA ligase (662 aa).

NAD(+) is bound by residues 32–36 (DAEYD), 81–82 (SL), and glutamate 112. The active-site N6-AMP-lysine intermediate is lysine 114. Residues arginine 135, glutamate 170, lysine 286, and lysine 310 each coordinate NAD(+). 4 residues coordinate Zn(2+): cysteine 402, cysteine 405, cysteine 420, and cysteine 425. Residues 583 to 662 (PKGGPLTGST…AELHAMLRGE (80 aa)) enclose the BRCT domain.

Belongs to the NAD-dependent DNA ligase family. LigA subfamily. Mg(2+) is required as a cofactor. Mn(2+) serves as cofactor.

The catalysed reaction is NAD(+) + (deoxyribonucleotide)n-3'-hydroxyl + 5'-phospho-(deoxyribonucleotide)m = (deoxyribonucleotide)n+m + AMP + beta-nicotinamide D-nucleotide.. DNA ligase that catalyzes the formation of phosphodiester linkages between 5'-phosphoryl and 3'-hydroxyl groups in double-stranded DNA using NAD as a coenzyme and as the energy source for the reaction. It is essential for DNA replication and repair of damaged DNA. The protein is DNA ligase of Solibacter usitatus (strain Ellin6076).